Reading from the N-terminus, the 1027-residue chain is Sodium/potassium-transporting ATPase subunit alpha-1 (1027 aa).

Residues 1-5 constitute a propeptide that is removed on maturation; the sequence is MGVGD. A compositionally biased stretch (basic and acidic residues) spans 1 to 10; it reads MGVGDGRDQY. The disordered stretch occupies residues 1–39; the sequence is MGVGDGRDQYELAAMSEQSGKKKSKNKKEKKEKDMDELK. Residues 6–90 lie on the Cytoplasmic side of the membrane; that stretch reads GRDQYELAAM…NALTPPPTTP (85 aa). Ser-16 carries the phosphoserine; by PKC modification. Over residues 29–39 the composition is skewed to basic and acidic residues; that stretch reads EKKEKDMDELK. The segment at 85–87 is interaction with phosphoinositide-3 kinase; it reads PPP. A helical membrane pass occupies residues 91-111; the sequence is EWVKFCKQMFGGFSMLLWTGA. Topologically, residues 112–134 are extracellular; sequence VLCFLAYGILAAMEDEPANDNLY. The helical transmembrane segment at 135–155 threads the bilayer; that stretch reads LGVVLSAVVIITGCFSYYQDA. The Cytoplasmic segment spans residues 156 to 291; the sequence is KSSKIMDSFK…VGRTPISIEI (136 aa). Residues 217–238 are disordered; that stretch reads DNSSLTGESEPQTRSPDFSNDN. The helical transmembrane segment at 292-311 threads the bilayer; sequence EHFIHIITGVAVFLGVSFLL. At 312–323 the chain is on the extracellular side; sequence LSLVLGYSWLEA. A helical transmembrane segment spans residues 324–341; that stretch reads VIFLIGIIVANVPEGLLA. Residues 342-776 are Cytoplasmic-facing; the sequence is TVTVCLTLTA…EEGRLIFDNL (435 aa). The 4-aspartylphosphate intermediate role is filled by Asp-379. Residue Lys-490 coordinates ATP. 2 residues coordinate Mg(2+): Asp-721 and Asp-725. Residues 777-796 form a helical membrane-spanning segment; that stretch reads KKSIAYTLTSNIPEITPFLF. Topologically, residues 797–806 are extracellular; the sequence is FIIANIPLPL. The chain crosses the membrane as a helical span at residues 807–827; the sequence is GTVTILCIDLGTDMLPAISLA. Over 828-847 the chain is Cytoplasmic; sequence YEAAESDIMKRQPRNPKTDK. Residues 848 to 870 form a helical membrane-spanning segment; sequence LVNERLISIAYGQIGMIQALAGF. The Extracellular portion of the chain corresponds to 871-922; that stretch reads FTYFVILAENGFLPPRLLGIRMNWDDKYINDLEDSYGQQWTYEQRKIVEFTC. A helical membrane pass occupies residues 923-942; the sequence is HTAFFTSIVIVQWADLIICK. Over 943–955 the chain is Cytoplasmic; the sequence is TRRNSVFQQGMKN. Ser-947 is modified (phosphoserine; by PKA). A helical membrane pass occupies residues 956-974; the sequence is KILIFGLFEETALAAFLSY. The Extracellular segment spans residues 975–989; that stretch reads CPGMDVALRMYPLKP. A helical transmembrane segment spans residues 990-1010; sequence NWWFCAFPYSLLIFIYDEIRK. The Cytoplasmic portion of the chain corresponds to 1011-1027; that stretch reads LILRRNPGGWMERETYY.

Belongs to the cation transport ATPase (P-type) (TC 3.A.3) family. Type IIC subfamily. In terms of assembly, the sodium/potassium-transporting ATPase is composed of a catalytic alpha subunit, an auxiliary non-catalytic beta subunit and an additional regulatory subunit.

It localises to the cell membrane. The protein resides in the sarcolemma. It carries out the reaction K(+)(out) + Na(+)(in) + ATP + H2O = K(+)(in) + Na(+)(out) + ADP + phosphate + H(+). Its function is as follows. This is the catalytic component of the active enzyme, which catalyzes the hydrolysis of ATP coupled with the exchange of sodium and potassium ions across the plasma membrane. This action creates the electrochemical gradient of sodium and potassium ions, providing the energy for active transport of various nutrients. The protein is Sodium/potassium-transporting ATPase subunit alpha-1 (atp1a1) of Catostomus commersonii (White sucker).